The chain runs to 126 residues: Histone H2B type 1-L (126 aa).

The segment covering Met-1–Lys-12 has biased composition (low complexity). Residues Met-1 to Glu-36 form a disordered region. Pro-2 carries the post-translational modification N-acetylproline. At Glu-3 the chain carries ADP-ribosyl glutamic acid. Lys-6 is modified (N6-(2-hydroxyisobutyryl)lysine; alternate). Lys-6 carries the N6-(beta-hydroxybutyryl)lysine; alternate modification. Lys-6 carries the post-translational modification N6-acetyllysine; alternate. Lys-6 carries the post-translational modification N6-butyryllysine; alternate. N6-crotonyllysine; alternate is present on Lys-6. Residue Lys-6 is modified to N6-lactoyllysine; alternate. Lys-6 is covalently cross-linked (Glycyl lysine isopeptide (Lys-Gly) (interchain with G-Cter in SUMO2); alternate). Residue Ser-7 is modified to ADP-ribosylserine. An N6-(beta-hydroxybutyryl)lysine; alternate modification is found at Lys-12. N6-acetyllysine; alternate occurs at positions 12 and 13. N6-crotonyllysine; alternate is present on residues Lys-12 and Lys-13. Lys-12 bears the N6-lactoyllysine; alternate mark. Residue Lys-13 is modified to N6-(2-hydroxyisobutyryl)lysine; alternate. Position 15 is a phosphoserine; by STK4/MST1 (Ser-15). 4 positions are modified to N6-acetyllysine; alternate: Lys-16, Lys-17, Lys-21, and Lys-24. Lys-16, Lys-17, Lys-21, and Lys-24 each carry N6-crotonyllysine; alternate. Residues Lys-16, Lys-17, Lys-21, and Lys-24 each carry the N6-lactoyllysine; alternate modification. An N6-(beta-hydroxybutyryl)lysine; alternate mark is found at Lys-17 and Lys-21. Lys-17 is modified (N6-glutaryllysine; alternate). N6-(2-hydroxyisobutyryl)lysine; alternate occurs at positions 21 and 24. N6-butyryllysine; alternate is present on Lys-21. A Glycyl lysine isopeptide (Lys-Gly) (interchain with G-Cter in SUMO2); alternate cross-link involves residue Lys-21. At Lys-25 the chain carries N6-(2-hydroxyisobutyryl)lysine. Lys-35 is subject to N6-(2-hydroxyisobutyryl)lysine; alternate. N6-(beta-hydroxybutyryl)lysine; alternate is present on Lys-35. Position 35 is an N6-crotonyllysine; alternate (Lys-35). N6-glutaryllysine; alternate is present on Lys-35. Lys-35 is modified (N6-succinyllysine; alternate). Residue Lys-35 forms a Glycyl lysine isopeptide (Lys-Gly) (interchain with G-Cter in ubiquitin); alternate linkage. A PolyADP-ribosyl glutamic acid modification is found at Glu-36. The residue at position 37 (Ser-37) is a Phosphoserine; by AMPK. 3 positions are modified to N6-(2-hydroxyisobutyryl)lysine; alternate: Lys-44, Lys-47, and Lys-58. Position 44 is an N6-lactoyllysine; alternate (Lys-44). An N6-glutaryllysine; alternate mark is found at Lys-44 and Lys-47. N6-methyllysine; alternate is present on Lys-47. Lys-58 carries the N6,N6-dimethyllysine; alternate modification. The residue at position 80 (Arg-80) is a Dimethylated arginine. The residue at position 86 (Lys-86) is an N6-(2-hydroxyisobutyryl)lysine; alternate. Lys-86 carries the post-translational modification N6-(beta-hydroxybutyryl)lysine; alternate. Lys-86 carries the post-translational modification N6-acetyllysine; alternate. Lys-86 is subject to N6-lactoyllysine; alternate. An N6,N6,N6-trimethyllysine; alternate modification is found at Lys-86. Residues Arg-87 and Arg-93 each carry the omega-N-methylarginine modification. Lys-109 bears the N6-(2-hydroxyisobutyryl)lysine; alternate mark. The residue at position 109 (Lys-109) is an N6-lactoyllysine; alternate. Lys-109 carries the N6-glutaryllysine; alternate modification. Lys-109 carries the N6-methyllysine; alternate modification. Ser-113 carries an O-linked (GlcNAc) serine glycan. At Thr-116 the chain carries Phosphothreonine. N6-(2-hydroxyisobutyryl)lysine; alternate occurs at positions 117 and 121. An N6-(beta-hydroxybutyryl)lysine; alternate mark is found at Lys-117 and Lys-121. N6-lactoyllysine; alternate is present on residues Lys-117 and Lys-121. 2 positions are modified to N6-glutaryllysine; alternate: Lys-117 and Lys-121. N6-succinyllysine; alternate is present on residues Lys-117 and Lys-121. Lys-117 carries the post-translational modification N6-malonyllysine; alternate. At Lys-117 the chain carries N6-methylated lysine; alternate. Lys-121 participates in a covalent cross-link: Glycyl lysine isopeptide (Lys-Gly) (interchain with G-Cter in ubiquitin); alternate.

This sequence belongs to the histone H2B family. The nucleosome is a histone octamer containing two molecules each of H2A, H2B, H3 and H4 assembled in one H3-H4 heterotetramer and two H2A-H2B heterodimers. The octamer wraps approximately 147 bp of DNA. Post-translationally, monoubiquitination at Lys-35 (H2BK34Ub) by the MSL1/MSL2 dimer is required for histone H3 'Lys-4' (H3K4me) and 'Lys-79' (H3K79me) methylation and transcription activation at specific gene loci, such as HOXA9 and MEIS1 loci. Similarly, monoubiquitination at Lys-121 (H2BK120Ub) by the RNF20/40 complex gives a specific tag for epigenetic transcriptional activation and is also prerequisite for histone H3 'Lys-4' and 'Lys-79' methylation. It also functions cooperatively with the FACT dimer to stimulate elongation by RNA polymerase II. H2BK120Ub also acts as a regulator of mRNA splicing: deubiquitination by USP49 is required for efficient cotranscriptional splicing of a large set of exons. In terms of processing, phosphorylation at Ser-37 (H2BS36ph) by AMPK in response to stress promotes transcription. Phosphorylated on Ser-15 (H2BS14ph) by STK4/MST1 during apoptosis; which facilitates apoptotic chromatin condensation. Also phosphorylated on Ser-15 in response to DNA double strand breaks (DSBs), and in correlation with somatic hypermutation and immunoglobulin class-switch recombination. GlcNAcylation at Ser-113 promotes monoubiquitination of Lys-121. It fluctuates in response to extracellular glucose, and associates with transcribed genes. Post-translationally, ADP-ribosylated by PARP1 or PARP2 on Ser-7 (H2BS6ADPr) in response to DNA damage. H2BS6ADPr promotes recruitment of CHD1L. Mono-ADP-ribosylated on Glu-3 (H2BE2ADPr) by PARP3 in response to single-strand breaks. Poly ADP-ribosylation on Glu-36 (H2BE35ADPr) by PARP1 regulates adipogenesis: it inhibits phosphorylation at Ser-37 (H2BS36ph), thereby blocking expression of pro-adipogenetic genes. In terms of processing, crotonylation (Kcr) is specifically present in male germ cells and marks testis-specific genes in post-meiotic cells, including X-linked genes that escape sex chromosome inactivation in haploid cells. Crotonylation marks active promoters and enhancers and confers resistance to transcriptional repressors. It is also associated with post-meiotically activated genes on autosomes. Lactylated in macrophages by EP300/P300 by using lactoyl-CoA directly derived from endogenous or exogenous lactate, leading to stimulates gene transcription.

Its subcellular location is the nucleus. The protein localises to the chromosome. In terms of biological role, core component of nucleosome. Nucleosomes wrap and compact DNA into chromatin, limiting DNA accessibility to the cellular machineries which require DNA as a template. Histones thereby play a central role in transcription regulation, DNA repair, DNA replication and chromosomal stability. DNA accessibility is regulated via a complex set of post-translational modifications of histones, also called histone code, and nucleosome remodeling. The protein is Histone H2B type 1-L of Homo sapiens (Human).